A 484-amino-acid polypeptide reads, in one-letter code: Protein nucleotidyltransferase YdiU (484 aa).

Positions 81, 83, 84, 103, 115, 116, 166, and 173 each coordinate ATP. Catalysis depends on D244, which acts as the Proton acceptor. Residues N245 and D254 each coordinate Mg(2+). D254 serves as a coordination point for ATP.

This sequence belongs to the SELO family. Mg(2+) serves as cofactor. Mn(2+) is required as a cofactor.

It carries out the reaction L-seryl-[protein] + ATP = 3-O-(5'-adenylyl)-L-seryl-[protein] + diphosphate. The enzyme catalyses L-threonyl-[protein] + ATP = 3-O-(5'-adenylyl)-L-threonyl-[protein] + diphosphate. It catalyses the reaction L-tyrosyl-[protein] + ATP = O-(5'-adenylyl)-L-tyrosyl-[protein] + diphosphate. The catalysed reaction is L-histidyl-[protein] + UTP = N(tele)-(5'-uridylyl)-L-histidyl-[protein] + diphosphate. It carries out the reaction L-seryl-[protein] + UTP = O-(5'-uridylyl)-L-seryl-[protein] + diphosphate. The enzyme catalyses L-tyrosyl-[protein] + UTP = O-(5'-uridylyl)-L-tyrosyl-[protein] + diphosphate. Its function is as follows. Nucleotidyltransferase involved in the post-translational modification of proteins. It can catalyze the addition of adenosine monophosphate (AMP) or uridine monophosphate (UMP) to a protein, resulting in modifications known as AMPylation and UMPylation. This Shewanella loihica (strain ATCC BAA-1088 / PV-4) protein is Protein nucleotidyltransferase YdiU.